Here is a 677-residue protein sequence, read N- to C-terminus: Mitochondrial 15S rRNA processing factor ppr3 (677 aa).

The N-terminal 43 residues, 1 to 43 (MFTEICGKLRTCIYKKVAFSRPLGCNLRQLPVFRDFHNSVSCL), are a transit peptide targeting the mitochondrion. 6 PPR repeats span residues 210-244 (SVYL…QLKP), 245-279 (DNYT…KIEA), 280-314 (NTHV…SLQS), 317-351 (DDKT…PINP), 355-390 (SSRT…QWKP), and 569-604 (DIHV…SYLP).

This sequence belongs to the CCM1 family. In terms of assembly, binds to mitochondrial small subunit 15S rRNA.

Its subcellular location is the mitochondrion. Functionally, regulates mitochondrial small subunit maturation by controlling 15S rRNA 5'-end processing. Localizes to the 5' precursor of the 15S rRNA in a position that is subsequently occupied by mS47 in the mature yeast mtSSU. Uses structure and sequence-specific RNA recognition, binding to a single-stranded region of the precursor and specifically recognizing bases -6 to -1. The exchange of Ccm1 for mS47 is coupled to the irreversible removal of precursor rRNA that is accompanied by conformational changes of the mitoribosomal proteins uS5m and mS26. These conformational changes signal completion of 5'-end rRNA processing through protection of the mature 5'-end of the 15S rRNA and stabilization of mS47. The removal of the 5' precursor together with the dissociation of Ccm1 may be catalyzed by the 5'-3' exoribonuclease Pet127. Involved in the specific removal of group I introns in mitochondrial encoded transcripts. This Schizosaccharomyces japonicus (strain yFS275 / FY16936) (Fission yeast) protein is Mitochondrial 15S rRNA processing factor ppr3 (dmr1).